Here is a 552-residue protein sequence, read N- to C-terminus: DNA ligase (552 aa).

E244 contacts ATP. K246 serves as the catalytic N6-AMP-lysine intermediate. ATP-binding residues include R251, R266, E296, F336, R408, and K414.

This sequence belongs to the ATP-dependent DNA ligase family. It depends on Mg(2+) as a cofactor.

The catalysed reaction is ATP + (deoxyribonucleotide)n-3'-hydroxyl + 5'-phospho-(deoxyribonucleotide)m = (deoxyribonucleotide)n+m + AMP + diphosphate.. Functionally, DNA ligase that seals nicks in double-stranded DNA during DNA replication, DNA recombination and DNA repair. This chain is DNA ligase, found in Methanothrix thermoacetophila (strain DSM 6194 / JCM 14653 / NBRC 101360 / PT) (Methanosaeta thermophila).